The sequence spans 623 residues: Quinoprotein ethanol dehydrogenase (623 aa).

The N-terminal stretch at 1-34 is a signal peptide; the sequence is MTIRSLPAALSPLSMAVQAVLLVSSLALAPAANA. Ca(2+) is bound by residues D45 and N51. Pyrroloquinoline quinone is bound at residue E95. C139 and C140 form a disulfide bridge. Pyrroloquinoline quinone-binding positions include R145, T189, and 207–209; that span reads HGS. E213 serves as a coordination point for Ca(2+). Positions 242 to 279 are disordered; the sequence is GRLNGKDSTPTGDVKAPSWPDDPTTETGKVESWSHGGG. Residues N300 and D350 each contribute to the Ca(2+) site. D350 acts as the Proton acceptor in catalysis. R378 lines the pyrroloquinoline quinone pocket. Positions 414-436 are disordered; that stretch reads RPVENEGQRPAKPLPGETKGKPV. WD repeat units lie at residues 515-556 and 559-601; these read EHNE…ELWK and TGSG…LTKP. Positions 523 and 587 each coordinate pyrroloquinoline quinone.

The protein belongs to the bacterial PQQ dehydrogenase family. In terms of assembly, homodimer. Requires pyrroloquinoline quinone as cofactor. Ca(2+) serves as cofactor.

Its subcellular location is the periplasm. The catalysed reaction is a primary alcohol + 2 Fe(III)-[cytochrome c] = an aldehyde + 2 Fe(II)-[cytochrome c] + 2 H(+). It carries out the reaction ethanol + 2 Fe(III)-[cytochrome c] = acetaldehyde + 2 Fe(II)-[cytochrome c] + 2 H(+). It catalyses the reaction ethanol + A = acetaldehyde + AH2. The enzyme catalyses 1-propanol + 2 Fe(III)-[cytochrome c] = propanal + 2 Fe(II)-[cytochrome c] + 2 H(+). Its pathway is alcohol metabolism; ethanol degradation; acetate from ethanol: step 1/2. Its activity is regulated as follows. Enhanced by the presence of ethylamine or NH4(+) ions. Catalyzes the oxidation of ethanol and other primary alcohols to the corresponding aldehydes, except methanol, which is not a substrate. Uses a specific inducible cytochrome c550, encoded by the adjacent gene in the locus, as electron acceptor. Is a key enzyme of the carbon and energy metabolism during growth of P.putida on ethanol as the sole carbon and energy source. Displays lower activity on secondary alcohols, aldehydes and diols. Is not active with sugar alcohols such as glycerol and D-sorbitol. In vitro, reacts well with phenazine methosulfate (PMS) as an electron acceptor but not with NAD(P), potassium ferricyanide, or molecular oxygen. The protein is Quinoprotein ethanol dehydrogenase of Pseudomonas putida (Arthrobacter siderocapsulatus).